A 250-amino-acid polypeptide reads, in one-letter code: Nuclear transcription factor Y subunit C-4 (250 aa).

Low complexity predominate over residues 1–10 (MDNNNNNNNQ). 2 disordered regions span residues 1-35 (MDNN…PSGS) and 209-250 (GVYA…DSQG). The segment covering 214-225 (PPSQAWQSVWQN) has biased composition (polar residues). The segment covering 227-242 (AGGGDDVSYGSGGSSG) has biased composition (gly residues).

This sequence belongs to the NFYC/HAP5 subunit family. Heterotrimeric transcription factor composed of three components, NF-YA, NF-YB and NF-YC. NF-YB and NF-YC must interact and dimerize for NF-YA association and DNA binding. In terms of tissue distribution, ubiquitous. Present in etiolated seedlings.

The protein localises to the nucleus. In terms of biological role, stimulates the transcription of various genes by recognizing and binding to a CCAAT motif in promoters. Involved in the abscisic acid (ABA) signaling pathway. The protein is Nuclear transcription factor Y subunit C-4 (NFYC4) of Arabidopsis thaliana (Mouse-ear cress).